We begin with the raw amino-acid sequence, 148 residues long: Glutaredoxin-C10 (148 aa).

Residues 16-55 (TLDLTVHPPPPPPLPPPAPSTVSSSTASTSLSFDEEETSE) are disordered. Residues 22 to 34 (HPPPPPPLPPPAP) are compositionally biased toward pro residues. Over residues 35–47 (STVSSSTASTSLS) the composition is skewed to low complexity. Residues 55-147 (ESKIGRLISE…PRLVEVGALW (93 aa)) enclose the Glutaredoxin domain. The cysteines at positions 76 and 79 are disulfide-linked.

This sequence belongs to the glutaredoxin family. CC-type subfamily.

It localises to the cytoplasm. Functionally, has a glutathione-disulfide oxidoreductase activity in the presence of NADPH and glutathione reductase. Reduces low molecular weight disulfides and proteins. This chain is Glutaredoxin-C10 (GRXC10), found in Arabidopsis thaliana (Mouse-ear cress).